We begin with the raw amino-acid sequence, 697 residues long: Elongation factor G 2 (697 aa).

The region spanning 5–280 (SKYRNIGIFA…AVVDYLPAPN (276 aa)) is the tr-type G domain. Residues 14 to 21 (AHVDAGKT), 78 to 82 (DTPGH), and 132 to 135 (NKLD) contribute to the GTP site.

This sequence belongs to the TRAFAC class translation factor GTPase superfamily. Classic translation factor GTPase family. EF-G/EF-2 subfamily.

Its subcellular location is the cytoplasm. Functionally, catalyzes the GTP-dependent ribosomal translocation step during translation elongation. During this step, the ribosome changes from the pre-translocational (PRE) to the post-translocational (POST) state as the newly formed A-site-bound peptidyl-tRNA and P-site-bound deacylated tRNA move to the P and E sites, respectively. Catalyzes the coordinated movement of the two tRNA molecules, the mRNA and conformational changes in the ribosome. This Shewanella sp. (strain MR-4) protein is Elongation factor G 2.